The primary structure comprises 702 residues: Flagellar operon control protein UmoB (702 aa).

Helical transmembrane passes span 4–24 (SVIILAIFMISLFIMAAFLFF), 204–224 (GFWNGSLICLGLILWLTALMM), 227–247 (VFLPWIMAAGGTFLVLGLFLI), 343–363 (IIFVVCSLFIIGMLYLYQPLS), and 656–676 (GNTLLLFFAIGFLILNLFFII).

Belongs to the IgaA family.

It is found in the cell inner membrane. Its function is as follows. Up-regulator of flagellar flhDC master operon. In Proteus mirabilis, this protein is Flagellar operon control protein UmoB (umoB).